The following is a 362-amino-acid chain: Protein mom-2 (362 aa).

The N-terminal stretch at 1–24 (MHINTPVLLAIIYFLVFAPKSADA) is a signal peptide. 5 cysteine pairs are disulfide-bonded: cysteine 80–cysteine 91, cysteine 129–cysteine 137, cysteine 139–cysteine 167, cysteine 217–cysteine 231, and cysteine 219–cysteine 226. Residue asparagine 90 is glycosylated (N-linked (GlcNAc...) asparagine). Serine 223 carries the O-palmitoleoyl serine; by mom-1 lipid modification. Positions 263 to 282 (TVRSSPSAGSSGRSERFARN) are disordered. Low complexity predominate over residues 265–274 (RSSPSAGSSG). Disulfide bonds link cysteine 304–cysteine 322, cysteine 313–cysteine 317, cysteine 321–cysteine 361, cysteine 337–cysteine 352, cysteine 339–cysteine 349, and cysteine 344–cysteine 345.

It belongs to the Wnt family. In terms of processing, palmitoleoylation is required for efficient binding to frizzled receptors. Depalmitoleoylation leads to Wnt signaling pathway inhibition. As to expression, expressed by anchor cell and vulva precursor cell descendants P5.ppa, P5.ppp, P7.paa and P7.pap. Expressed in the tail and weakly expressed in the vulva and body wall muscles.

The protein localises to the secreted. Its subcellular location is the extracellular space. The protein resides in the extracellular matrix. Functionally, ligand for members of the frizzled family of seven transmembrane receptors. Required in embryonic development for endoderm specification and the correct positioning and orientation of the mitotic spindles and division planes in blastomere cells. Involved in cleavage axis determination. Binds to receptor tyrosine kinase cam-1. Together with wnt ligand lin-44, plays a role in controlling vulva precursor cell P7.p lineage orientation during vulva development, probably by acting as a ligand for tyrosine kinase receptor lin-18. May act redundantly with other Wnt ligands such as cwn-1 and cwn-2 to control seam cell polarity. In Caenorhabditis elegans, this protein is Protein mom-2 (mom-2).